Here is a 356-residue protein sequence, read N- to C-terminus: NADH-quinone oxidoreductase subunit H (356 aa).

The next 8 membrane-spanning stretches (helical) occupy residues 18–38 (IVMV…IAYI), 87–107 (GVFL…WAVI), 120–140 (VGIL…IMGG), 166–186 (IGFV…SAIV), 202–222 (WLTF…VFYV), 257–277 (LFML…AILF), 292–312 (WVPG…LIAM), and 333–353 (FLPL…FAGI).

Belongs to the complex I subunit 1 family. In terms of assembly, NDH-1 is composed of 14 different subunits. Subunits NuoA, H, J, K, L, M, N constitute the membrane sector of the complex.

It is found in the cell inner membrane. It catalyses the reaction a quinone + NADH + 5 H(+)(in) = a quinol + NAD(+) + 4 H(+)(out). In terms of biological role, NDH-1 shuttles electrons from NADH, via FMN and iron-sulfur (Fe-S) centers, to quinones in the respiratory chain. The immediate electron acceptor for the enzyme in this species is believed to be ubiquinone. Couples the redox reaction to proton translocation (for every two electrons transferred, four hydrogen ions are translocated across the cytoplasmic membrane), and thus conserves the redox energy in a proton gradient. This subunit may bind ubiquinone. The sequence is that of NADH-quinone oxidoreductase subunit H from Nitrobacter winogradskyi (strain ATCC 25391 / DSM 10237 / CIP 104748 / NCIMB 11846 / Nb-255).